A 197-amino-acid polypeptide reads, in one-letter code: Phosphoheptose isomerase (197 aa).

An SIS domain is found at 36–197; the sequence is MVNALLNEGK…IDSQLFGSEE (162 aa). 51–53 is a substrate binding site; that stretch reads NGG. Residues His60 and Glu64 each contribute to the Zn(2+) site. Substrate contacts are provided by residues Glu64, 93 to 94, 119 to 121, Ser124, and Gln174; these read ND and STS. Gln174 and His182 together coordinate Zn(2+).

This sequence belongs to the SIS family. GmhA subfamily. As to quaternary structure, homotetramer. Requires Zn(2+) as cofactor.

The protein resides in the cytoplasm. The catalysed reaction is 2 D-sedoheptulose 7-phosphate = D-glycero-alpha-D-manno-heptose 7-phosphate + D-glycero-beta-D-manno-heptose 7-phosphate. The protein operates within carbohydrate biosynthesis; D-glycero-D-manno-heptose 7-phosphate biosynthesis; D-glycero-alpha-D-manno-heptose 7-phosphate and D-glycero-beta-D-manno-heptose 7-phosphate from sedoheptulose 7-phosphate: step 1/1. Catalyzes the isomerization of sedoheptulose 7-phosphate in D-glycero-D-manno-heptose 7-phosphate. This chain is Phosphoheptose isomerase, found in Pseudomonas fluorescens (strain SBW25).